A 168-amino-acid polypeptide reads, in one-letter code: Small ribosomal subunit protein uS9 (168 aa).

A compositionally biased stretch (low complexity) spans 1–11 (MAQNEELTTEA). The segment at 1-36 (MAQNEELTTEAVEAEENPTSYTSESSAAEAAPKKER) is disordered.

It belongs to the universal ribosomal protein uS9 family.

This chain is Small ribosomal subunit protein uS9, found in Pseudarthrobacter chlorophenolicus (strain ATCC 700700 / DSM 12829 / CIP 107037 / JCM 12360 / KCTC 9906 / NCIMB 13794 / A6) (Arthrobacter chlorophenolicus).